Consider the following 81-residue polypeptide: Mu/omega-theraphotoxin-Hs1a (81 aa).

The signal sequence occupies residues 1-21 (MRASMFLALAGLVLLFVVCYA). The propeptide occupies 22–48 (SESEEKEFPRELLFKFFAVDDFKGEER). Disulfide bonds link cysteine 50/cysteine 65, cysteine 57/cysteine 70, and cysteine 64/cysteine 77.

This sequence belongs to the neurotoxin 10 (Hwtx-1) family. 23 (HwTx-I) subfamily. As to expression, expressed by the venom gland.

The protein resides in the secreted. Functionally, lethal toxin with multiple biological activities. Inhibits voltage-gated TTX-sensitive sodium channels in DRG neurons (IC(50)=55 nM) and also shows activity when directly tested on Nav1.7/SCN9A (IC(50)=25.1-630 nM). Inhibits N-type calcium channels (Cav2.2/CACNA1B (IC(50)=100 nM)). Also blocks neuromuscular transmission. In vivo, intrathecal injected toxin shows analgesic activity in the rat formalin-induced pain model, without induction of motor dysfunction in rats. This is Mu/omega-theraphotoxin-Hs1a from Cyriopagopus schmidti (Chinese bird spider).